Consider the following 293-residue polypeptide: CDP-abequose synthase (293 aa).

Thr-113 is a binding site for substrate. Catalysis depends on Tyr-130, which acts as the Proton acceptor.

Belongs to the NAD(P)-dependent epimerase/dehydratase family.

It carries out the reaction CDP-alpha-D-abequose + NADP(+) = CDP-4-dehydro-3,6-dideoxy-alpha-D-glucose + NADPH + H(+). Its pathway is bacterial outer membrane biogenesis; LPS O-antigen biosynthesis. This chain is CDP-abequose synthase, found in Salmonella muenchen.